The chain runs to 529 residues: UDP-glycosyltransferase (529 aa).

N-linked (GlcNAc...) asparagine glycans are attached at residues Asn70 and Asn420. Residues 504-524 form a helical membrane-spanning segment; it reads LDLYLVYIALFAVPVGAVRWI.

Belongs to the glycosyltransferase 28 family.

The protein localises to the membrane. The catalysed reaction is stromemycin aglycone + UDP-alpha-D-glucose = stromemycin + UDP + H(+). Its pathway is mycotoxin biosynthesis. In terms of biological role, UDP-glycosyltransferase; part of the gene cluster that mediates the biosynthesis of stromemycin, a depside C-glucoside with two unsaturated C9 side chains belonging to aromatic polyketide glycosides. Acts as the tailoring enzyme responsible for 3-C-glucosylation of bininalkenylresorcylic acid to yield stromemycin. The sequence is that of UDP-glycosyltransferase from Talaromyces amestolkiae.